Here is a 440-residue protein sequence, read N- to C-terminus: C4-dicarboxylate transport protein (440 aa).

9 helical membrane-spanning segments follow: residues 15–35 (VLVAITIGILLGHYYPETGVA), 46–66 (LIKMVIAPIIFCTVVSGIAGM), 78–98 (YALLYFEIVSTIALIIGLVVV), 146–166 (AFANGDILQVLMFSVLFGFAL), 190–210 (IINMIMKLAPIGAFGAMAFTI), 224–244 (LMACFYITCILFVLVVLGGIC), 291–311 (VVGLVIPTGYSFNLDGTSIYL), 332–352 (ITLLLVLLVASKGAAGVTGSG), and 354–374 (IVLAATLSAVGHLPVAGLALI). Residues 419-440 (GGSPLVDTRPTDDLGVAEGPAR) are disordered.

It belongs to the dicarboxylate/amino acid:cation symporter (DAACS) (TC 2.A.23) family.

The protein resides in the cell inner membrane. Functionally, responsible for the transport of dicarboxylates such as succinate, fumarate, and malate from the periplasm across the membrane. The chain is C4-dicarboxylate transport protein from Pseudomonas entomophila (strain L48).